The chain runs to 368 residues: Xaa-Pro dipeptidase (368 aa).

Residues aspartate 223, aspartate 234, histidine 298, glutamate 327, and glutamate 341 each coordinate Mn(2+).

It belongs to the peptidase M24B family. The cofactor is Mn(2+).

It localises to the cytoplasm. It carries out the reaction Xaa-L-Pro dipeptide + H2O = an L-alpha-amino acid + L-proline. The polypeptide is Xaa-Pro dipeptidase (pepQ) (Lactobacillus helveticus (Lactobacillus suntoryeus)).